The following is a 337-amino-acid chain: MGFKPFLEGGIAAIIAGALTHPLDLIKVRMQLQGEHSFSLDQNPNPNLSLDHNLPVKPYRPVFALDSLIGSISLLPLHIHAPSSSTRSVMTPFAVGAHIVKTEGPAALFSGVSATILRQMLYSATRMGIYDFLKRRWTDQLTGNFPLVTKITAGLIAGAVGSVVGNPADVAMVRMQADGSLPLNRRRNYKSVVDAIDRIARQEGVSSLWRGSWLTVNRAMIVTASQLATYDHVKEILVAGGRGTPGGIGTHVAASFAAGIVAAVASNPIDVVKTRMMNADKEIYGGPLDCAVKMVAEEGPMALYKGLVPTATRQGPFTMILFLTLEQVRGLLKDVKF.

Solcar repeat units lie at residues 4–136 (KPFL…LKRR), 145–236 (FPLV…VKEI), and 246–331 (GGIG…VRGL). 6 helical membrane-spanning segments follow: residues 6 to 26 (FLEG…LDLI), 105 to 125 (PAAL…YSAT), 151 to 171 (ITAG…ADVA), 210 to 230 (RGSW…LATY), 252 to 272 (VAAS…IDVV), and 304 to 324 (YKGL…LFLT).

This sequence belongs to the mitochondrial carrier (TC 2.A.29) family.

The protein resides in the mitochondrion inner membrane. In terms of biological role, PUMPS are mitochondrial transporter proteins that create proton leaks across the inner mitochondrial membrane, thus uncoupling oxidative phosphorylation. This leads to a decrease in the efficiency of oxidative phosphorylation and an increase in heat production. May be involved in protecting plant cells against oxidative stress damage. Recombinant PUMP6, reconstituted into liposomes, transports a wide range of dicarboxylic acids including malate, oxaloacetate and succinate as well as phosphate, sulfate and thiosulfate. However, it is unknown if these transports are of any biological significance in vivo. This chain is Mitochondrial uncoupling protein 6 (PUMP6), found in Arabidopsis thaliana (Mouse-ear cress).